Reading from the N-terminus, the 452-residue chain is UDP-N-acetylmuramoylalanine--D-glutamate ligase (452 aa).

115–121 lines the ATP pocket; it reads GTNGKTT.

The protein belongs to the MurCDEF family.

It localises to the cytoplasm. The enzyme catalyses UDP-N-acetyl-alpha-D-muramoyl-L-alanine + D-glutamate + ATP = UDP-N-acetyl-alpha-D-muramoyl-L-alanyl-D-glutamate + ADP + phosphate + H(+). It functions in the pathway cell wall biogenesis; peptidoglycan biosynthesis. Functionally, cell wall formation. Catalyzes the addition of glutamate to the nucleotide precursor UDP-N-acetylmuramoyl-L-alanine (UMA). This chain is UDP-N-acetylmuramoylalanine--D-glutamate ligase, found in Elusimicrobium minutum (strain Pei191).